The following is a 450-amino-acid chain: Protein tweety homolog 1 (450 aa).

The Extracellular segment spans residues 1 to 43 (MGAPPGYRPSAWVHLLHQLPRADFQLRPVPSGFAPRDQEYQQA). Residues 44-64 (LLLVAALAGLGLGLSLIFIAV) form a helical membrane-spanning segment. Residues 65-88 (YLIRFCCCRPPEPPGAKSPPPGGG) lie on the Cytoplasmic side of the membrane. The helical transmembrane segment at 89–109 (CVTWSCIAALLVGCAGIGIGF) threads the bilayer. At 110–214 (YGNSETSDGV…DVTFVEEYRW (105 aa)) the chain is on the extracellular side. The N-linked (GlcNAc...) asparagine glycan is linked to Asn-130. Residues 215-235 (LAYVLLLLLVLLVCLFTLLGL) traverse the membrane as a helical segment. Residues 236-240 (AKQSK) are Cytoplasmic-facing. The chain crosses the membrane as a helical span at residues 241 to 261 (WLVVVMTAMSLLVLVLSWGSM). Residues 262–390 (GLEAATAVGL…LRGLCEDALE (129 aa)) are Extracellular-facing. Cystine bridges form between Cys-275-Cys-385 and Cys-303-Cys-370. 2 N-linked (GlcNAc...) asparagine glycosylation sites follow: Asn-284 and Asn-355. The helical transmembrane segment at 391–411 (GLLFLMLFSLLSAGALATTLC) threads the bilayer. Residues 412–450 (SLPRAWALFPPSDDYDDTDDDDPFNPQESKRFVQWQSSI) are Cytoplasmic-facing. Residues 428-450 (DTDDDDPFNPQESKRFVQWQSSI) form a disordered region. Ser-440 carries the post-translational modification Phosphoserine.

It belongs to the tweety family. As to quaternary structure, homotetramer; disulfide-linked. Homodimer. Post-translationally, N-glycosylated. Contains high-mannose, hybrid and complex oligosaccharides.

It is found in the cell membrane. The catalysed reaction is chloride(in) = chloride(out). It catalyses the reaction L-glutamate(out) = L-glutamate(in). Calcium-independent, swelling-dependent volume-regulated anion channel (VRAC-swell) which plays a pivotal role in the process of regulatory volume decrease (RVD) in the brain through the efflux of anions like chloride and organic osmolytes like glutamate. This is Protein tweety homolog 1 (Ttyh1) from Rattus norvegicus (Rat).